The following is an 86-amino-acid chain: Large ribosomal subunit protein bL27 (86 aa).

The segment at 1–20 (MAHKKAGGSSRNGRDSESKR) is disordered.

Belongs to the bacterial ribosomal protein bL27 family.

This is Large ribosomal subunit protein bL27 from Paraburkholderia phymatum (strain DSM 17167 / CIP 108236 / LMG 21445 / STM815) (Burkholderia phymatum).